The following is a 409-amino-acid chain: Magnesium-protoporphyrin IX monomethyl ester [oxidative] cyclase, chloroplastic (409 aa).

Disordered regions lie at residues 1–23 and 36–60; these read MAAEMALVKPISKFSSPKLSNPS and RMSASSSPPPPTTATSKSKKGTKKE. The N-terminal 36 residues, 1 to 36, are a transit peptide targeting the chloroplast; that stretch reads MAAEMALVKPISKFSSPKLSNPSKFLSGRRFSTVIR. A compositionally biased stretch (polar residues) spans 13 to 23; that stretch reads KFSSPKLSNPS.

The protein belongs to the AcsF family. Part of the FLU-containing chloroplast membrane complex composed of FLU, CRD1, PORB, PORC, CHLP and HEMA1. Interacts with YCF54 in chloroplasts. Requires Fe cation as cofactor.

It is found in the plastid. The protein resides in the chloroplast inner membrane. The protein localises to the chloroplast thylakoid membrane. It carries out the reaction Mg-protoporphyrin IX 13-monomethyl ester + 3 NADPH + 3 O2 + 2 H(+) = 3,8-divinyl protochlorophyllide a + 3 NADP(+) + 5 H2O. It participates in porphyrin-containing compound metabolism; chlorophyll biosynthesis. Catalytic component of the MgProto monomethylester (MgProtoME) cyclase complex that catalyzes the formation of the isocyclic ring in chlorophyll biosynthesis. Mediates the cyclase reaction, which results in the formation of divinylprotochlorophyllide (Pchlide) characteristic of all chlorophylls from magnesium-protoporphyrin IX 13-monomethyl ester (MgPMME). This Arabidopsis thaliana (Mouse-ear cress) protein is Magnesium-protoporphyrin IX monomethyl ester [oxidative] cyclase, chloroplastic.